We begin with the raw amino-acid sequence, 418 residues long: Metacaspase-4 (418 aa).

Residues H86 and C139 contribute to the active site. The residue at position 139 (C139) is an S-nitrosocysteine. The interval 153–172 is disordered; it reads GESTKKEAEDEDESEESSSR.

The protein belongs to the peptidase C14B family. In terms of processing, the two subunits are derived from the precursor sequence by an autocatalytic mechanism. Expressed in roots, cotyledons, leaves, cauline leaves, pollen and embryos.

The protein resides in the cytoplasm. It localises to the cytosol. With respect to regulation, activated by Ca(2+) which induces self-processing and accelerates the rate of the enzyme activity, but has no effect on Km. Cysteine protease that cleaves specifically after arginine or lysine residues. Does not cleave caspase-specific substrates. Plays a positive regulatory role in biotic and abiotic stress-induced programmed cell death. The chain is Metacaspase-4 (AMC4) from Arabidopsis thaliana (Mouse-ear cress).